The primary structure comprises 231 residues: 7-cyano-7-deazaguanine synthase (231 aa).

8 to 18 (LSGGLDSATAA) contributes to the ATP binding site. C189, C197, C200, and C203 together coordinate Zn(2+).

This sequence belongs to the QueC family. It depends on Zn(2+) as a cofactor.

The enzyme catalyses 7-carboxy-7-deazaguanine + NH4(+) + ATP = 7-cyano-7-deazaguanine + ADP + phosphate + H2O + H(+). Its pathway is purine metabolism; 7-cyano-7-deazaguanine biosynthesis. Its function is as follows. Catalyzes the ATP-dependent conversion of 7-carboxy-7-deazaguanine (CDG) to 7-cyano-7-deazaguanine (preQ(0)). The protein is 7-cyano-7-deazaguanine synthase of Synechococcus elongatus (strain ATCC 33912 / PCC 7942 / FACHB-805) (Anacystis nidulans R2).